The primary structure comprises 90 residues: Large ribosomal subunit protein bL27 (90 aa).

A disordered region spans residues 1–21 (MASKKAGGSTRNGRDSEAKRL).

Belongs to the bacterial ribosomal protein bL27 family.

The chain is Large ribosomal subunit protein bL27 from Neisseria gonorrhoeae (strain ATCC 700825 / FA 1090).